The chain runs to 344 residues: Arginine N-succinyltransferase (344 aa).

Leu-125 is a succinyl-CoA binding site. The Proton donor role is filled by His-229.

The protein belongs to the arginine N-succinyltransferase family.

It carries out the reaction succinyl-CoA + L-arginine = N(2)-succinyl-L-arginine + CoA + H(+). Its pathway is amino-acid degradation; L-arginine degradation via AST pathway; L-glutamate and succinate from L-arginine: step 1/5. Functionally, catalyzes the transfer of succinyl-CoA to arginine to produce N(2)-succinylarginine. The polypeptide is Arginine N-succinyltransferase (Shigella flexneri).